The sequence spans 406 residues: Tyrosine--tRNA ligase (406 aa).

Tyr-35 is a binding site for L-tyrosine. The 'HIGH' region motif lies at 40–49; it reads ATSTSLHIGH. L-tyrosine is bound by residues Tyr-166 and Gln-170. The 'KMSKS' region motif lies at 226–230; the sequence is KMGKS. Residue Lys-229 coordinates ATP. In terms of domain architecture, S4 RNA-binding spans 341 to 405; the sequence is ILLIDLMVLS…IGKKRILRVI (65 aa).

Belongs to the class-I aminoacyl-tRNA synthetase family. TyrS type 1 subfamily. Homodimer.

The protein localises to the cytoplasm. It carries out the reaction tRNA(Tyr) + L-tyrosine + ATP = L-tyrosyl-tRNA(Tyr) + AMP + diphosphate + H(+). In terms of biological role, catalyzes the attachment of tyrosine to tRNA(Tyr) in a two-step reaction: tyrosine is first activated by ATP to form Tyr-AMP and then transferred to the acceptor end of tRNA(Tyr). The chain is Tyrosine--tRNA ligase from Borrelia turicatae (strain 91E135).